We begin with the raw amino-acid sequence, 125 residues long: Holo-[acyl-carrier-protein] synthase (125 aa).

Aspartate 8 and glutamate 57 together coordinate Mg(2+).

Belongs to the P-Pant transferase superfamily. AcpS family. Mg(2+) serves as cofactor.

It is found in the cytoplasm. It carries out the reaction apo-[ACP] + CoA = holo-[ACP] + adenosine 3',5'-bisphosphate + H(+). Functionally, transfers the 4'-phosphopantetheine moiety from coenzyme A to a Ser of acyl-carrier-protein. In Neisseria meningitidis serogroup A / serotype 4A (strain DSM 15465 / Z2491), this protein is Holo-[acyl-carrier-protein] synthase.